The chain runs to 419 residues: S-adenosylmethionine synthase (419 aa).

His14 serves as a coordination point for ATP. Asp16 serves as a coordination point for Mg(2+). A K(+)-binding site is contributed by Glu42. Residues Glu55 and Gln98 each contribute to the L-methionine site. The flexible loop stretch occupies residues 98–108 (QSADINQGVDR). Residues 164 to 166 (DAK), 242 to 243 (KF), Asp251, 257 to 258 (RK), Ala274, and Lys278 each bind ATP. Asp251 contributes to the L-methionine binding site. Lys282 contacts L-methionine.

It belongs to the AdoMet synthase family. In terms of assembly, homotetramer; dimer of dimers. It depends on Mg(2+) as a cofactor. K(+) serves as cofactor.

It localises to the cytoplasm. It catalyses the reaction L-methionine + ATP + H2O = S-adenosyl-L-methionine + phosphate + diphosphate. It functions in the pathway amino-acid biosynthesis; S-adenosyl-L-methionine biosynthesis; S-adenosyl-L-methionine from L-methionine: step 1/1. Functionally, catalyzes the formation of S-adenosylmethionine (AdoMet) from methionine and ATP. The overall synthetic reaction is composed of two sequential steps, AdoMet formation and the subsequent tripolyphosphate hydrolysis which occurs prior to release of AdoMet from the enzyme. This is S-adenosylmethionine synthase from Cytophaga hutchinsonii (strain ATCC 33406 / DSM 1761 / CIP 103989 / NBRC 15051 / NCIMB 9469 / D465).